Here is a 707-residue protein sequence, read N- to C-terminus: Elongation factor G (707 aa).

The tr-type G domain occupies 8–297 (ERVRNIGIAA…AVVDYLPSPV (290 aa)). Residues 17-24 (AHIDAGKT), 96-100 (DTPGH), and 150-153 (NKMD) contribute to the GTP site.

Belongs to the TRAFAC class translation factor GTPase superfamily. Classic translation factor GTPase family. EF-G/EF-2 subfamily.

Its subcellular location is the cytoplasm. In terms of biological role, catalyzes the GTP-dependent ribosomal translocation step during translation elongation. During this step, the ribosome changes from the pre-translocational (PRE) to the post-translocational (POST) state as the newly formed A-site-bound peptidyl-tRNA and P-site-bound deacylated tRNA move to the P and E sites, respectively. Catalyzes the coordinated movement of the two tRNA molecules, the mRNA and conformational changes in the ribosome. The sequence is that of Elongation factor G from Synechococcus sp. (strain JA-2-3B'a(2-13)) (Cyanobacteria bacterium Yellowstone B-Prime).